Here is a 219-residue protein sequence, read N- to C-terminus: Thiamine-phosphate synthase (219 aa).

4-amino-2-methyl-5-(diphosphooxymethyl)pyrimidine-binding positions include 48–52 (QFRQK) and asparagine 84. Aspartate 85 and aspartate 104 together coordinate Mg(2+). Serine 123 is a binding site for 4-amino-2-methyl-5-(diphosphooxymethyl)pyrimidine. 150–152 (TPS) contacts 2-[(2R,5Z)-2-carboxy-4-methylthiazol-5(2H)-ylidene]ethyl phosphate. Lysine 153 provides a ligand contact to 4-amino-2-methyl-5-(diphosphooxymethyl)pyrimidine. Residues glycine 181 and 199 to 200 (IS) contribute to the 2-[(2R,5Z)-2-carboxy-4-methylthiazol-5(2H)-ylidene]ethyl phosphate site.

Belongs to the thiamine-phosphate synthase family. The cofactor is Mg(2+).

It carries out the reaction 2-[(2R,5Z)-2-carboxy-4-methylthiazol-5(2H)-ylidene]ethyl phosphate + 4-amino-2-methyl-5-(diphosphooxymethyl)pyrimidine + 2 H(+) = thiamine phosphate + CO2 + diphosphate. The enzyme catalyses 2-(2-carboxy-4-methylthiazol-5-yl)ethyl phosphate + 4-amino-2-methyl-5-(diphosphooxymethyl)pyrimidine + 2 H(+) = thiamine phosphate + CO2 + diphosphate. It catalyses the reaction 4-methyl-5-(2-phosphooxyethyl)-thiazole + 4-amino-2-methyl-5-(diphosphooxymethyl)pyrimidine + H(+) = thiamine phosphate + diphosphate. The protein operates within cofactor biosynthesis; thiamine diphosphate biosynthesis; thiamine phosphate from 4-amino-2-methyl-5-diphosphomethylpyrimidine and 4-methyl-5-(2-phosphoethyl)-thiazole: step 1/1. Condenses 4-methyl-5-(beta-hydroxyethyl)thiazole monophosphate (THZ-P) and 2-methyl-4-amino-5-hydroxymethyl pyrimidine pyrophosphate (HMP-PP) to form thiamine monophosphate (TMP). The polypeptide is Thiamine-phosphate synthase (Helicobacter pylori (strain HPAG1)).